We begin with the raw amino-acid sequence, 388 residues long: MGRARRFQWPLLLLWAAAAGPGAGQEVQTENVTVAEGGVAEITCRLHQYDGSIVVIQNPARQTLFFNGTRALKDERFQLEEFSPRRVRIRLSDARLEDEGGYFCQLYTEDTHHQIATLTVLVAPENPVVEVREQAVEGGEVELSCLVPRSRPAATLRWYRDRKELKGVSSSQENGKVWSVASTVRFRVDRKDDGGIIICEAQNQALPSGHSKQTQYVLDVQYSPTARIHASQAVVREGDTLVLTCAVTGNPRPNQIRWNRGNESLPERAEAVGETLTLPGLVSADNGTYTCEASNKHGHARALYVLVVYDPGAVVEAQTSVPYAIVGGILALLVFLIICVLVGMVWCSVRQKGSYLTHEASGLDEQGEAREAFLNGSDGHKRKEEFFI.

The first 20 residues, 1–20, serve as a signal peptide directing secretion; the sequence is MGRARRFQWPLLLLWAAAAG. In terms of domain architecture, Ig-like V-type spans 21-119; sequence PGAGQEVQTE…DTHHQIATLT (99 aa). The Extracellular segment spans residues 21-324; it reads PGAGQEVQTE…VEAQTSVPYA (304 aa). N-linked (GlcNAc...) asparagine glycosylation is found at N31 and N67. 3 cysteine pairs are disulfide-bonded: C44/C104, C145/C199, and C245/C291. Ig-like C2-type domains lie at 124–219 and 224–307; these read PENP…YVLD and PTAR…YVLV. N286 carries an N-linked (GlcNAc...) asparagine glycan. Residues 325-345 form a helical membrane-spanning segment; that stretch reads IVGGILALLVFLIICVLVGMV. Over 346-388 the chain is Cytoplasmic; it reads WCSVRQKGSYLTHEASGLDEQGEAREAFLNGSDGHKRKEEFFI. Phosphoserine is present on S361.

This sequence belongs to the nectin family. In terms of assembly, monomer and homodimer. In terms of processing, N-glycosylated. As to expression, expressed in brain, prostate, brain, kidney and some other organs.

The protein localises to the membrane. Its function is as follows. Involved in the cell-cell adhesion. Has calcium- and magnesium-independent cell-cell adhesion activity. May have tumor-suppressor activity. The sequence is that of Cell adhesion molecule 4 (CADM4) from Homo sapiens (Human).